A 255-amino-acid chain; its full sequence is tRNA pseudouridine synthase B (255 aa).

The active-site Nucleophile is the aspartate 58.

Belongs to the pseudouridine synthase TruB family. Type 1 subfamily.

The catalysed reaction is uridine(55) in tRNA = pseudouridine(55) in tRNA. In terms of biological role, responsible for synthesis of pseudouridine from uracil-55 in the psi GC loop of transfer RNAs. The chain is tRNA pseudouridine synthase B from Chlorobium chlorochromatii (strain CaD3).